Consider the following 738-residue polypeptide: Adhesion G protein-coupled receptor L4 (738 aa).

An N-terminal signal peptide occupies residues 1–19 (MRLLLLLVGLSTLLNHSYT). The 37-residue stretch at 20-56 (QNCKTPCLPNAKCEVLDEVAACFCSTGYTGNGITICE) folds into the EGF-like 1 domain. The Extracellular portion of the chain corresponds to 20-480 (QNCKTPCLPN…DYNILTRITQ (461 aa)). Intrachain disulfides connect Cys-22-Cys-32, Cys-26-Cys-41, Cys-43-Cys-55, Cys-61-Cys-73, Cys-67-Cys-82, Cys-84-Cys-105, Cys-111-Cys-123, Cys-117-Cys-132, and Cys-134-Cys-155. The 50-residue stretch at 57 to 106 (DVDECNETSVCGDHAVCENTNGGFSCFCVEGYQTSTGKTQFTPNDGSYCQ) folds into the EGF-like 2; calcium-binding domain. Asn-62 is a glycosylation site (N-linked (GlcNAc...) asparagine). The EGF-like 3; calcium-binding domain maps to 107–156 (DVDECNETSVCGDHAVCENTNGGFSCFCVEGYQTSTGKTQFTPNDGSYCQ). An N-linked (GlcNAc...) asparagine glycan is attached at Asn-112. N-linked (GlcNAc...) asparagine glycans are attached at residues Asn-175, Asn-226, Asn-297, Asn-421, Asn-429, and Asn-443. In terms of domain architecture, GAIN-B spans 292 to 467 (TQFDMNSTDL…AILMSPSTSI (176 aa)). 2 disulfides stabilise this stretch: Cys-417/Cys-449 and Cys-437/Cys-451. The segment at 417 to 467 (CAFWNYSVDDMNNGSWSSEGCELTYSNDTHTSCRCSHLTHFAILMSPSTSI) is GPS. Residues 481-501 (LGIIISLICLAICIFTFWFFS) traverse the membrane as a helical segment. The Cytoplasmic segment spans residues 502–522 (EIQSTRTTIHKNLCCSLFLAQ). Residues 523 to 543 (LVFLVGININTNKLVCSIIAG) traverse the membrane as a helical segment. Residues 544-547 (LLHY) are Extracellular-facing. Residues 548 to 568 (FFLAAFAWMCIEGIYLYLIVV) traverse the membrane as a helical segment. Residues 569–580 (GLIYNKGFLHKN) are Cytoplasmic-facing. Residues 581 to 601 (FYIFGYLSPAVVVGFSASLGY) traverse the membrane as a helical segment. The Extracellular portion of the chain corresponds to 602-621 (RYYGTTKVCWLSTENNFIWS). The helical transmembrane segment at 622-642 (FIGPACLIILVNLLAFGVIIY) threads the bilayer. Topologically, residues 643–666 (KVFRHTAGLKPEVSCYENIRSCAR) are cytoplasmic. Residues 667-687 (GALALLFLLGTTWTFGVLHVV) form a helical membrane-spanning segment. Over 688–694 (HASVVTA) the chain is Extracellular. A helical membrane pass occupies residues 695 to 715 (YLFTVSNAFQGMFIFLFLCVL). The Cytoplasmic segment spans residues 716 to 738 (SRKIQEEYYRLFKNVPCCFECLR).

Belongs to the G-protein coupled receptor 2 family. Adhesion G-protein coupled receptor (ADGR) subfamily. Heterodimer of 2 chains generated by proteolytic processing; the large extracellular N-terminal fragment and the membrane-bound C-terminal fragment predominantly remain associated and non-covalently linked. Post-translationally, proteolytically cleaved into 2 subunits, an extracellular alpha subunit and a seven-transmembrane subunit. In terms of processing, glycosylated. As to expression, abundantly expressed in heart, lung, and kidney. Less evident expression is observed in brain, skeletal muscle, liver and spleen. No expression is detected in testis.

Its subcellular location is the cell membrane. Its function is as follows. Endothelial orphan receptor that acts as a key regulator of angiogenesis. In Rattus norvegicus (Rat), this protein is Adhesion G protein-coupled receptor L4 (Adgrl4).